The following is a 521-amino-acid chain: 2-hydroxyisoflavanone synthase (521 aa).

The helical transmembrane segment at 2–23 threads the bilayer; the sequence is LLELALGLLVLALFLHLRPTPT. C449 is a binding site for heme.

The protein belongs to the cytochrome P450 family. The cofactor is heme.

Its subcellular location is the endoplasmic reticulum membrane. The protein localises to the microsome membrane. It catalyses the reaction (2S)-liquiritigenin + reduced [NADPH--hemoprotein reductase] + O2 = (2R,3S)-2,4',7-trihydroxyisoflavanone + oxidized [NADPH--hemoprotein reductase] + H2O + H(+). It carries out the reaction (2S)-naringenin + reduced [NADPH--hemoprotein reductase] + O2 = 2-hydroxy-2,3-dihydrogenistein + oxidized [NADPH--hemoprotein reductase] + H2O + H(+). In terms of biological role, involved in isoflavonoid biosynthesis. Converts liquiritigenin to 2-hydroxyisoflavanone which spontaneously dehydrates to daidzein. The polypeptide is 2-hydroxyisoflavanone synthase (IFS2) (Glycine max (Soybean)).